A 475-amino-acid polypeptide reads, in one-letter code: Ankyrin repeat, SAM and basic leucine zipper domain-containing protein 1 (475 aa).

The segment at 1–24 (MAASALRGPPVAGGGESSESEDDG) is disordered. Serine 17, serine 18, and serine 20 each carry phosphoserine. 6 ANK repeats span residues 45–74 (EKKE…SVDS), 78–107 (YGWT…NASF), 110–144 (DKQS…DPNV), 148–177 (RLMT…EVNT), 181–210 (NGYT…NKML), and 214–243 (DGKM…PLEG). The SAM domain occupies 272 to 334 (SYTAFGDLEV…KILAALKELQ (63 aa)).

Interacts with DDX4, PIWIL1, RANBP9 and TDRD1.

The protein localises to the cytoplasm. Its function is as follows. Plays a central role during spermatogenesis by repressing transposable elements and preventing their mobilization, which is essential for the germline integrity. Acts via the piRNA metabolic process, which mediates the repression of transposable elements during meiosis by forming complexes composed of piRNAs and Piwi proteins and governs the methylation and subsequent repression of transposons. Its association with pi-bodies suggests a participation in the primary piRNAs metabolic process. Required prior to the pachytene stage to facilitate the production of multiple types of piRNAs, including those associated with repeats involved in the regulation of retrotransposons. May act by mediating protein-protein interactions during germ cell maturation. The sequence is that of Ankyrin repeat, SAM and basic leucine zipper domain-containing protein 1 (ASZ1) from Gorilla gorilla gorilla (Western lowland gorilla).